Consider the following 94-residue polypeptide: Putative pterin-4-alpha-carbinolamine dehydratase (94 aa).

This sequence belongs to the pterin-4-alpha-carbinolamine dehydratase family.

The catalysed reaction is (4aS,6R)-4a-hydroxy-L-erythro-5,6,7,8-tetrahydrobiopterin = (6R)-L-erythro-6,7-dihydrobiopterin + H2O. This Mycobacterium sp. (strain KMS) protein is Putative pterin-4-alpha-carbinolamine dehydratase.